We begin with the raw amino-acid sequence, 233 residues long: Thymidylate kinase (233 aa).

Position 10-17 (10-17 (GVDGVGKT)) interacts with ATP.

Belongs to the thymidylate kinase family.

It carries out the reaction dTMP + ATP = dTDP + ADP. In terms of biological role, phosphorylation of dTMP to form dTDP in both de novo and salvage pathways of dTTP synthesis. The polypeptide is Thymidylate kinase (Bifidobacterium longum subsp. infantis (strain ATCC 15697 / DSM 20088 / JCM 1222 / NCTC 11817 / S12)).